Here is a 209-residue protein sequence, read N- to C-terminus: Ribosomal RNA large subunit methyltransferase E (209 aa).

S-adenosyl-L-methionine is bound by residues glycine 63, tryptophan 65, aspartate 83, aspartate 99, and aspartate 124. Lysine 164 acts as the Proton acceptor in catalysis.

Belongs to the class I-like SAM-binding methyltransferase superfamily. RNA methyltransferase RlmE family.

It localises to the cytoplasm. It catalyses the reaction uridine(2552) in 23S rRNA + S-adenosyl-L-methionine = 2'-O-methyluridine(2552) in 23S rRNA + S-adenosyl-L-homocysteine + H(+). Specifically methylates the uridine in position 2552 of 23S rRNA at the 2'-O position of the ribose in the fully assembled 50S ribosomal subunit. In Shewanella sp. (strain MR-7), this protein is Ribosomal RNA large subunit methyltransferase E.